Here is a 120-residue protein sequence, read N- to C-terminus: Large ribosomal subunit protein bL17 (120 aa).

The protein belongs to the bacterial ribosomal protein bL17 family. Part of the 50S ribosomal subunit. Contacts protein L32.

This is Large ribosomal subunit protein bL17 from Desulforapulum autotrophicum (strain ATCC 43914 / DSM 3382 / VKM B-1955 / HRM2) (Desulfobacterium autotrophicum).